A 49-amino-acid chain; its full sequence is Large ribosomal subunit protein bL33A (49 aa).

It belongs to the bacterial ribosomal protein bL33 family.

The chain is Large ribosomal subunit protein bL33A from Latilactobacillus sakei subsp. sakei (strain 23K) (Lactobacillus sakei subsp. sakei).